We begin with the raw amino-acid sequence, 334 residues long: HTH-type transcriptional repressor PurR (334 aa).

The 55-residue stretch at 2–56 (ATIKDVARLAGVSTTTVSHVINKTRFVAEATQEKVMKAVDELNYAPSAVARSLKC) folds into the HTH lacI-type domain. Positions 4 to 23 (IKDVARLAGVSTTTVSHVIN) form a DNA-binding region, H-T-H motif. Residues 48-56 (SAVARSLKC) mediate DNA binding. Hypoxanthine contacts are provided by F73, K189, F220, and D274.

Homodimer.

It functions in the pathway purine metabolism; purine nucleotide biosynthesis [regulation]. Functionally, is the main repressor of the genes involved in the de novo synthesis of purine nucleotides, regulating purB, purC, purEK, purF, purHD, purL, purMN and guaBA expression. PurR is allosterically activated to bind its cognate DNA by binding the purine corepressors, hypoxanthine or guanine, thereby effecting transcription repression. The polypeptide is HTH-type transcriptional repressor PurR (Vibrio vulnificus (strain CMCP6)).